A 928-amino-acid chain; its full sequence is Nuclear pore complex-interacting protein family member B12 (928 aa).

Residues Val-73–Ser-93 form a helical membrane-spanning segment. Disordered regions lie at residues Arg-242–Thr-452 and Glu-663–Ser-928. The segment covering Gln-252 to Leu-263 has biased composition (polar residues). Positions Pro-349–Pro-359 are enriched in pro residues. 4 stretches are compositionally biased toward basic and acidic residues: residues Asp-406–Arg-416, Asp-698–Arg-708, Asp-740–Arg-750, and Asp-782–Arg-792.

It belongs to the NPIP family.

Its subcellular location is the membrane. The sequence is that of Nuclear pore complex-interacting protein family member B12 from Homo sapiens (Human).